The sequence spans 280 residues: Probable N-acetyltransferase 14 (280 aa).

The next 2 helical transmembrane spans lie at 37–57 (LILHLLTRPLALLLLAILSSI) and 60–80 (CVLHSFVLALVIPVFISVIYL). The interval 111-152 (PDLPNPHLGRAKLTTNQEKTRRRKKAKEKEKMNESEQVDEDE) is disordered. The region spanning 116–273 (PHLGRAKLTT…EKGWLGYPLT (158 aa)) is the N-acetyltransferase domain.

This sequence belongs to the camello family.

The protein localises to the membrane. Its function is as follows. Probable acetyltransferase. This chain is Probable N-acetyltransferase 14 (nat14), found in Danio rerio (Zebrafish).